The chain runs to 537 residues: CTP synthase (537 aa).

Residues 1–267 are amidoligase domain; it reads MTNTKFVFVT…ISVLEERLFG (267 aa). Position 15 (Ser-15) interacts with CTP. Ser-15 lines the UTP pocket. An ATP-binding site is contributed by 16-21; that stretch reads SVGKGI. Tyr-56 provides a ligand contact to L-glutamine. Residue Asp-73 participates in ATP binding. 2 residues coordinate Mg(2+): Asp-73 and Glu-141. Residues 148–150, 188–193, and Lys-224 each bind CTP; these read DIE and KTKPTQ. Residues 188 to 193 and Lys-224 each bind UTP; that span reads KTKPTQ. The region spanning 297–535 is the Glutamine amidotransferase type-1 domain; sequence YVVLPDAYLS…LSEAVAKASP (239 aa). An L-glutamine-binding site is contributed by Gly-355. The active-site Nucleophile; for glutamine hydrolysis is the Cys-382. Residues 383–386, Glu-406, and Arg-463 contribute to the L-glutamine site; that span reads LGMQ. Residues His-508 and Glu-510 contribute to the active site.

It belongs to the CTP synthase family. In terms of assembly, homotetramer.

It catalyses the reaction UTP + L-glutamine + ATP + H2O = CTP + L-glutamate + ADP + phosphate + 2 H(+). It carries out the reaction L-glutamine + H2O = L-glutamate + NH4(+). The enzyme catalyses UTP + NH4(+) + ATP = CTP + ADP + phosphate + 2 H(+). Its pathway is pyrimidine metabolism; CTP biosynthesis via de novo pathway; CTP from UDP: step 2/2. Its activity is regulated as follows. Allosterically activated by GTP, when glutamine is the substrate; GTP has no effect on the reaction when ammonia is the substrate. The allosteric effector GTP functions by stabilizing the protein conformation that binds the tetrahedral intermediate(s) formed during glutamine hydrolysis. Inhibited by the product CTP, via allosteric rather than competitive inhibition. In terms of biological role, catalyzes the ATP-dependent amination of UTP to CTP with either L-glutamine or ammonia as the source of nitrogen. Regulates intracellular CTP levels through interactions with the four ribonucleotide triphosphates. The chain is CTP synthase from Coprothermobacter proteolyticus (strain ATCC 35245 / DSM 5265 / OCM 4 / BT).